The following is a 108-amino-acid chain: FK506-binding protein 1A (108 aa).

Positions 1–20 (MGVEVQRISPGDGKNFPKPG) are disordered. The PPIase FKBP-type domain occupies 20-108 (GDTVSIHYTG…TFEVELLKIN (89 aa)).

The protein belongs to the FKBP-type PPIase family. FKBP1 subfamily.

Its subcellular location is the cytoplasm. The enzyme catalyses [protein]-peptidylproline (omega=180) = [protein]-peptidylproline (omega=0). With respect to regulation, inhibited by both FK506 and rapamycin. In terms of biological role, PPIases accelerate the folding of proteins. It catalyzes the cis-trans isomerization of proline imidic peptide bonds in oligopeptides. The sequence is that of FK506-binding protein 1A (fprA) from Emericella nidulans (strain FGSC A4 / ATCC 38163 / CBS 112.46 / NRRL 194 / M139) (Aspergillus nidulans).